The chain runs to 282 residues: Elongation factor Ts (282 aa).

The involved in Mg(2+) ion dislocation from EF-Tu stretch occupies residues Thr-80 to Val-83.

This sequence belongs to the EF-Ts family.

The protein localises to the cytoplasm. Its function is as follows. Associates with the EF-Tu.GDP complex and induces the exchange of GDP to GTP. It remains bound to the aminoacyl-tRNA.EF-Tu.GTP complex up to the GTP hydrolysis stage on the ribosome. The protein is Elongation factor Ts of Chlamydia trachomatis serovar A (strain ATCC VR-571B / DSM 19440 / HAR-13).